The following is a 524-amino-acid chain: MTTTTQSEQDRVIIFDTTLRDGEQCPGATMTFEEKLNVARMLDDMGVDVIEAGYPFASDGDFEAVHEIAKRSKNSVICGLSRAAHKDIDRCAEAIKPAERGRIHTFLSTSPVHMKYKLQMEAAQVYEMVISSVTRARNHTDDVEWSAEDATRTEFDFLCRCIEAAIKAGATTINLPDTVGYAVPEEYRELFRKVRETVPNSDKARFSVHCHNDLGMAVANSMAGVAGGARQIECTINGIGERAGNAALEEVVMAMRVRQDRLPYWNRIETTMLTHASKTVSAATSFPVQYNKAIVGRNAFAHESGIHQDGMIKNAQTYEIMTPETVGVKGTSLVMGKHSGRAGLIHKMEELGYKLSRNQIEDVFVRFKALADRKKDVYDEDIEALVDEQLLHGQDQIKLMSLTVIAGTHGPQRATMKLDVDGQIRIEEAEGNGPVDAVFNCIKALVPHDAKLELYQVHAVTEGTDAQAEVSVRLSHEGRSMTARAADPDTLVASAKAYLGALNKIVAKRQRSVREDAPAVAVAG.

The Pyruvate carboxyltransferase domain maps to 12 to 274 (VIIFDTTLRD…WNRIETTMLT (263 aa)). The Mn(2+) site is built by D21, H209, H211, and N245. A regulatory domain region spans residues 398-524 (KLMSLTVIAG…EDAPAVAVAG (127 aa)).

It belongs to the alpha-IPM synthase/homocitrate synthase family. LeuA type 1 subfamily. Homodimer. It depends on Mn(2+) as a cofactor.

The protein resides in the cytoplasm. It carries out the reaction 3-methyl-2-oxobutanoate + acetyl-CoA + H2O = (2S)-2-isopropylmalate + CoA + H(+). Its pathway is amino-acid biosynthesis; L-leucine biosynthesis; L-leucine from 3-methyl-2-oxobutanoate: step 1/4. Catalyzes the condensation of the acetyl group of acetyl-CoA with 3-methyl-2-oxobutanoate (2-ketoisovalerate) to form 3-carboxy-3-hydroxy-4-methylpentanoate (2-isopropylmalate). The polypeptide is 2-isopropylmalate synthase (Rhodopseudomonas palustris (strain ATCC BAA-98 / CGA009)).